We begin with the raw amino-acid sequence, 88 residues long: Putative regulatory protein Ava_1474 (88 aa).

This sequence belongs to the RemA family.

The protein is Putative regulatory protein Ava_1474 of Trichormus variabilis (strain ATCC 29413 / PCC 7937) (Anabaena variabilis).